The chain runs to 518 residues: Bifunctional purine biosynthesis protein PurH (518 aa).

One can recognise an MGS-like domain in the interval 1–144 (MSKRALISVS…KNHASVTVVC (144 aa)).

This sequence belongs to the PurH family.

It catalyses the reaction (6R)-10-formyltetrahydrofolate + 5-amino-1-(5-phospho-beta-D-ribosyl)imidazole-4-carboxamide = 5-formamido-1-(5-phospho-D-ribosyl)imidazole-4-carboxamide + (6S)-5,6,7,8-tetrahydrofolate. The enzyme catalyses IMP + H2O = 5-formamido-1-(5-phospho-D-ribosyl)imidazole-4-carboxamide. It participates in purine metabolism; IMP biosynthesis via de novo pathway; 5-formamido-1-(5-phospho-D-ribosyl)imidazole-4-carboxamide from 5-amino-1-(5-phospho-D-ribosyl)imidazole-4-carboxamide (10-formyl THF route): step 1/1. It functions in the pathway purine metabolism; IMP biosynthesis via de novo pathway; IMP from 5-formamido-1-(5-phospho-D-ribosyl)imidazole-4-carboxamide: step 1/1. The sequence is that of Bifunctional purine biosynthesis protein PurH from Lactococcus lactis subsp. lactis (strain IL1403) (Streptococcus lactis).